Reading from the N-terminus, the 182-residue chain is Gremlin-1 (182 aa).

Positions 1 to 24 (MNCLVYALGSLFLLSGLLLPSSEG) are cleaved as a signal peptide. Positions 23–65 (EGKKKVSGSQGAIPPPDKGQPNDSEQGQAQPGDRVRGKGKGQA) are disordered. Asn44 carries N-linked (GlcNAc...) asparagine glycosylation. Cystine bridges form between Cys92-Cys142, Cys106-Cys156, Cys116-Cys174, and Cys120-Cys176. The 91-residue stretch at 92-182 (CKTQPLKQTI…QCRCISIDLD (91 aa)) folds into the CTCK domain.

This sequence belongs to the DAN family.

The protein resides in the secreted. Functionally, cytokine that has an axial patterning activity. Acts like BMP antagonist in embryonic explants. Blocks the BMP2 activity. The protein is Gremlin-1 (grem1) of Xenopus laevis (African clawed frog).